The primary structure comprises 368 residues: tRNA-specific 2-thiouridylase MnmA (368 aa).

Residues 11–18 (GMSGGVDS) and methionine 37 each bind ATP. The segment at 97–99 (NPD) is interaction with target base in tRNA. The active-site Nucleophile is cysteine 102. Residues cysteine 102 and cysteine 199 are joined by a disulfide bond. Glycine 127 contacts ATP. The interval 149 to 151 (KDQ) is interaction with tRNA. Cysteine 199 functions as the Cysteine persulfide intermediate in the catalytic mechanism. An interaction with tRNA region spans residues 311 to 312 (RY).

This sequence belongs to the MnmA/TRMU family. In terms of assembly, interacts with TusE.

It is found in the cytoplasm. The catalysed reaction is S-sulfanyl-L-cysteinyl-[protein] + uridine(34) in tRNA + AH2 + ATP = 2-thiouridine(34) in tRNA + L-cysteinyl-[protein] + A + AMP + diphosphate + H(+). Catalyzes the 2-thiolation of uridine at the wobble position (U34) of tRNA(Lys), tRNA(Glu) and tRNA(Gln), leading to the formation of s(2)U34, the first step of tRNA-mnm(5)s(2)U34 synthesis. Sulfur is provided by IscS, via a sulfur-relay system. Binds ATP and its substrate tRNAs. This chain is tRNA-specific 2-thiouridylase MnmA, found in Citrobacter koseri (strain ATCC BAA-895 / CDC 4225-83 / SGSC4696).